We begin with the raw amino-acid sequence, 128 residues long: MKQQVEVKELKEGKYVIIDDEACVIKSITKSKPGKHGAAKARVEAIGLFDGQKRSYIGSVANKIYVPIVERKTAQVISITGDITQLMDMGDFSTFEIVVPDEYKDKIKEGEEVSYITALGKIKLDIRT.

Lysine 35 carries the post-translational modification Hypusine.

The protein belongs to the eIF-5A family.

The protein localises to the cytoplasm. Functionally, functions by promoting the formation of the first peptide bond. The chain is Translation initiation factor 5A from Methanosarcina barkeri (strain Fusaro / DSM 804).